The primary structure comprises 157 residues: MKKIILAGGCFWGVEEFLSRINGVVSTEVGYANGRTENPTYEDICTKNTYFAEVCLVNYDENIISLKELLAKFWTIIDPTSLNKQGNDVGSQYRTGIYYVDPSDLEEILNSKEELQKSYSKKIVTEVKPLENYYKAEEYHQKYLKKNPNGYCHIKLD.

Residue C10 is part of the active site.

This sequence belongs to the MsrA Met sulfoxide reductase family.

It catalyses the reaction L-methionyl-[protein] + [thioredoxin]-disulfide + H2O = L-methionyl-(S)-S-oxide-[protein] + [thioredoxin]-dithiol. It carries out the reaction [thioredoxin]-disulfide + L-methionine + H2O = L-methionine (S)-S-oxide + [thioredoxin]-dithiol. Its function is as follows. Has an important function as a repair enzyme for proteins that have been inactivated by oxidation. Catalyzes the reversible oxidation-reduction of methionine sulfoxide in proteins to methionine. This is Peptide methionine sulfoxide reductase MsrA from Clostridium perfringens (strain ATCC 13124 / DSM 756 / JCM 1290 / NCIMB 6125 / NCTC 8237 / Type A).